A 923-amino-acid chain; its full sequence is MARALVQSTSIPSSVAGERTTKFNGSGKTKRAVTMLCNAQSSSLTLRDFTGLRGCNAIDTLVRSGETLQSKVAAATYVRRPRGCRFVPKAMFERFTEKAIKVIMLAQEEARRLGHNFVGTEQILLGLIGEGTGIAAKVLKSMGINLKDARVEVEKIIGRGSGFVAVEIPFTPRAKRVLELSLEEARQLGHNYIGSEHLLLGLLREGEGVAARVLENLGADPSNIRTQVIRMVGESNEAVGASVGGGTSGQKMPTLEEYGTNLTKLAEEGKLDPVVGRQPQIERVTQILGRRTKNNPCLIGEPGVGKTAIAEGLAQRIANGDVPETIEGKKVITLDMGLLVAGTKYRGEFEERLKKLMEEIKQSDEIILFIDEVHTLIGAGAAEGAIDAANILKPALARGELQCIGATTLDEYRKHIEKDPALERRFQPVKVPEPTVDETIQILKGLRERYEIHHKLRYTDEDLVAAAQLSYQYISDRFLPDKAIDLIDEAGSRVRLRHAQLPEEAKELEKELRQITKEKNEAVRGQDFEKAGELRDREMDLKAQITALIDKNKEVSKAESEAADTGPLVTEADIQHIVSSWTGIPVEKVSTDESDRLLKMEETLHTRIIGQDEAVKAISRAIRRARVGLKNPNRPIASFIFSGPTGVGKSELAKALAAYYFGSEEAMIRLDMSEFMERHTVSKLIGSPPGYVGYTEGGQLTEAVRRRPYTVVLFDEIEKAHPDVFNMMLQILEDGRLTDSKGRTVDFKNTLLIMTSNVGSSVIEKGGRRIGFDLDLDEKDSSYNRIKSLVTEELKQYFRPEFLNRLDEMIVFRQLTKLEVKEIADIMLKEVFERLKVKEIELQVTERFRDRVVDEGYNPSYGARPLRRAIMRLLEDSMAEKMLANEIKEGDSVIVDVDSDGNVTVLNGSSGTPSDPAPEPIPV.

In terms of domain architecture, Clp R spans 92–234 (FERFTEKAIK…RTQVIRMVGE (143 aa)). 2 repeat regions span residues 95–160 (FTEK…IGRG) and 170–234 (FTPR…MVGE). The interval 255 to 502 (LEEYGTNLTK…RVRLRHAQLP (248 aa)) is i. ATP is bound at residue 300-307 (GEPGVGKT). Residues 509-544 (EKELRQITKEKNEAVRGQDFEKAGELRDREMDLKAQ) enclose the UVR domain. Residues 569–760 (VTEADIQHIV…LLIMTSNVGS (192 aa)) are II. ATP is bound at residue 643–650 (GPTGVGKS).

It belongs to the ClpA/ClpB family.

It localises to the plastid. It is found in the chloroplast. Its function is as follows. May interact with a ClpP-like protease involved in degradation of denatured proteins in the chloroplast. This is ATP-dependent Clp protease ATP-binding subunit ClpA homolog CD4B, chloroplastic (CD4B) from Solanum lycopersicum (Tomato).